Reading from the N-terminus, the 248-residue chain is 5'-nucleotidase SurE (248 aa).

The a divalent metal cation site is built by Asp-8, Asp-9, Ser-39, and Asn-91.

It belongs to the SurE nucleotidase family. It depends on a divalent metal cation as a cofactor.

It is found in the cytoplasm. The catalysed reaction is a ribonucleoside 5'-phosphate + H2O = a ribonucleoside + phosphate. Functionally, nucleotidase that shows phosphatase activity on nucleoside 5'-monophosphates. In Shewanella amazonensis (strain ATCC BAA-1098 / SB2B), this protein is 5'-nucleotidase SurE.